The primary structure comprises 353 residues: MTAILERRESESLWGRFCNWITSTENRLYIGWFGVLMIPTLLTATSVFIIAFIAAPPVDIDGIREPVSGSLLYGNNIISGAIIPTSAAIGLHFYPIWEAASVDEWLYNGGPYELIVLHFLLGVACYMGREWELSFRLGMRPWIAVAYSAPVAAATAVFLIYPIGQGSFSDGMPLGISGTFNFMIVFQAEHNILMHPFHMLGVAGVFGGSLFSAMHGSLVTSSLIRETTENESANEGYRFGQEEETYNIVAAHGYFGRLIFQYASFNNSRSLHFFLAAWPVVGIWFTALGISTMAFNLNGFNFNQSVVDSQGRVINTWADIINRANLGMEVMHERNAHNFPLDLAAVEAPSTNG.

Thr2 is subject to N-acetylthreonine. Thr2 is subject to Phosphothreonine. The next 3 helical transmembrane spans lie at 29–46 (YIGWFGVLMIPTLLTATS), 118–133 (HFLLGVACYMGREWEL), and 142–156 (WIAVAYSAPVAAATA). His118 contributes to the chlorophyll a binding site. Residue Tyr126 participates in pheophytin a binding. Residues Asp170 and Glu189 each coordinate [CaMn4O5] cluster. Residues 197-218 (FHMLGVAGVFGGSLFSAMHGSL) form a helical membrane-spanning segment. His198 serves as a coordination point for chlorophyll a. A quinone is bound by residues His215 and 264–265 (SF). His215 contacts Fe cation. His272 is a binding site for Fe cation. The helical transmembrane segment at 274–288 (FLAAWPVVGIWFTAL) threads the bilayer. Residues His332, Glu333, Asp342, and Ala344 each coordinate [CaMn4O5] cluster. A propeptide spanning residues 345–353 (AVEAPSTNG) is cleaved from the precursor.

It belongs to the reaction center PufL/M/PsbA/D family. As to quaternary structure, PSII is composed of 1 copy each of membrane proteins PsbA, PsbB, PsbC, PsbD, PsbE, PsbF, PsbH, PsbI, PsbJ, PsbK, PsbL, PsbM, PsbT, PsbX, PsbY, PsbZ, Psb30/Ycf12, at least 3 peripheral proteins of the oxygen-evolving complex and a large number of cofactors. It forms dimeric complexes. The D1/D2 heterodimer binds P680, chlorophylls that are the primary electron donor of PSII, and subsequent electron acceptors. It shares a non-heme iron and each subunit binds pheophytin, quinone, additional chlorophylls, carotenoids and lipids. D1 provides most of the ligands for the Mn4-Ca-O5 cluster of the oxygen-evolving complex (OEC). There is also a Cl(-1) ion associated with D1 and D2, which is required for oxygen evolution. The PSII complex binds additional chlorophylls, carotenoids and specific lipids. is required as a cofactor. Tyr-161 forms a radical intermediate that is referred to as redox-active TyrZ, YZ or Y-Z. In terms of processing, C-terminally processed by CTPA; processing is essential to allow assembly of the oxygen-evolving complex and thus photosynthetic growth.

It localises to the plastid. The protein resides in the chloroplast thylakoid membrane. The enzyme catalyses 2 a plastoquinone + 4 hnu + 2 H2O = 2 a plastoquinol + O2. Functionally, photosystem II (PSII) is a light-driven water:plastoquinone oxidoreductase that uses light energy to abstract electrons from H(2)O, generating O(2) and a proton gradient subsequently used for ATP formation. It consists of a core antenna complex that captures photons, and an electron transfer chain that converts photonic excitation into a charge separation. The D1/D2 (PsbA/PsbD) reaction center heterodimer binds P680, the primary electron donor of PSII as well as several subsequent electron acceptors. This Oenothera parviflora (Small-flowered evening primrose) protein is Photosystem II protein D1.